The following is a 356-amino-acid chain: Peptide-N(4)-(N-acetyl-beta-glucosaminyl)asparagine amidase (356 aa).

4 residues coordinate Zn(2+): C129, C132, C163, and C166. Catalysis depends on C189, which acts as the Nucleophile. Active-site residues include H216 and D233. E236 provides a ligand contact to substrate. Residues 300–356 (IRQNLSPSEKEELKREDEAEERELASYNADEPQEAQMPRQSGSVEWTKARGEGGSDD) form a disordered region. Composition is skewed to basic and acidic residues over residues 307–316 (SEKEELKRED) and 346–356 (TKARGEGGSDD).

Belongs to the transglutaminase-like superfamily. PNGase family. Zn(2+) is required as a cofactor.

It localises to the cytoplasm. The enzyme catalyses Hydrolysis of an N(4)-(acetyl-beta-D-glucosaminyl)asparagine residue in which the glucosamine residue may be further glycosylated, to yield a (substituted) N-acetyl-beta-D-glucosaminylamine and a peptide containing an aspartate residue.. Specifically deglycosylates the denatured form of N-linked glycoproteins in the cytoplasm and assists their proteasome-mediated degradation. Cleaves the beta-aspartyl-glucosamine (GlcNAc) of the glycan and the amide side chain of Asn, converting Asn to Asp. Prefers proteins containing high-mannose over those bearing complex type oligosaccharides. Can recognize misfolded proteins in the endoplasmic reticulum that are exported to the cytosol to be destroyed and deglycosylate them, while it has no activity toward native proteins. Deglycosylation is a prerequisite for subsequent proteasome-mediated degradation of some, but not all, misfolded glycoproteins. The polypeptide is Peptide-N(4)-(N-acetyl-beta-glucosaminyl)asparagine amidase (PNG1) (Yarrowia lipolytica (strain CLIB 122 / E 150) (Yeast)).